Reading from the N-terminus, the 156-residue chain is Arginine repressor (156 aa).

Belongs to the ArgR family.

Its subcellular location is the cytoplasm. The protein operates within amino-acid biosynthesis; L-arginine biosynthesis [regulation]. Regulates arginine biosynthesis genes. In Shewanella oneidensis (strain ATCC 700550 / JCM 31522 / CIP 106686 / LMG 19005 / NCIMB 14063 / MR-1), this protein is Arginine repressor.